The chain runs to 2363 residues: Spectrin beta chain, non-erythrocytic 1 (2363 aa).

Residue Thr2 is modified to N-acetylthreonine. The tract at residues 2 to 275 (TTTVATDYDN…IITYVVTYYH (274 aa)) is actin-binding. Ile14 and Ser36 each carry phosphoserine. Calponin-homology (CH) domains lie at 54-158 (AVQK…LRFQ) and 173-278 (KSAK…HYFS). The residue at position 90 (Lys90) is an N6-acetyllysine. Residue Ser228 is modified to Phosphoserine. Spectrin repeat units lie at residues 303–411 (MIEK…LALR), 423–525 (LARR…QRLE), 530–636 (LQKI…RLEE), 639–742 (RLWK…RLEE), 745–847 (LLHQ…ALQD), 850–952 (ALYK…DALL), 957–1060 (IQNY…SLGE), 1063–1166 (KLQQ…NLLS), 1170–1259 (AYQQ…RHRK), 1276–1376 (DLQK…AQRL), 1381–1482 (KAEL…HNLL), 1486–1590 (EIHQ…RLEE), 1592–1696 (HKAQ…KLDE), 1698–1801 (HRLF…TQIL), and 1805–1907 (YELH…RVRL). Phosphoserine is present on residues Ser817, Ser903, Ser1057, Ser1076, Ser1079, and Ser1237. A phosphoserine mark is found at Ser1388, Ser1447, and Ser1557. The interval 1563–2093 (IRQRLADLKQ…LLEVRRQQEE (531 aa)) is interaction with ANK2. Tyr1805 carries the post-translational modification Phosphotyrosine. 3 positions are modified to N6-acetyllysine: Lys1815, Lys1913, and Lys1989. Spectrin repeat units follow at residues 1914 to 2014 (FRFF…EWLR) and 2018 to 2097 (EVHQ…EERK). The disordered stretch occupies residues 2089–2193 (RQQEEEERKR…AATLPARTLE (105 aa)). Ser2102, Ser2127, and Ser2137 each carry phosphoserine. Positions 2115 to 2130 (SQQWDTSKGDQVSQNG) are enriched in polar residues. Thr2146 bears the Phosphothreonine mark. Residue Ser2147 is modified to Phosphoserine. The tract at residues 2148 to 2176 (EMVNGAAEQRTSSKESSPVPSPTLDRKAK) is mediates interaction with CAMSAP1. The residue at position 2158 (Thr2158) is a Phosphothreonine. Phosphoserine is present on residues Ser2159, Ser2160, Ser2163, Ser2164, and Ser2168. Thr2170 carries the phosphothreonine modification. A Phosphoserine modification is found at Ser2183. 2 positions are modified to phosphothreonine: Thr2186 and Thr2194. Residues 2196–2306 (AAQMEGFLNR…WIQAISSAIS (111 aa)) form the PH domain. The segment at 2308–2363 (DKHDTSASTQSTPASSRAQTLPTSVVTITSESSPGKREKDKEKDKEKRFSLFGKKK) is disordered. Phosphoserine occurs at positions 2313 and 2318. Over residues 2313 to 2327 (SASTQSTPASSRAQT) the composition is skewed to low complexity. Thr2319 bears the Phosphothreonine mark. The O-linked (GlcNAc) serine glycan is linked to Ser2323. Phosphothreonine is present on Thr2327. The span at 2328 to 2340 (LPTSVVTITSESS) shows a compositional bias: polar residues. Phosphoserine occurs at positions 2339 and 2340. The span at 2341–2356 (PGKREKDKEKDKEKRF) shows a compositional bias: basic and acidic residues.

Belongs to the spectrin family. In terms of assembly, interacts with ANK2. Interacts with CPNE4 (via VWFA domain). Like erythrocyte spectrin, the spectrin-like proteins are capable to form dimers which can further associate to tetramers. Interacts with CAMSAP1. Can form heterodimers with SPTAN1. As to expression, isoform 2 is present in brain, heart, kidney and liver (at protein level).

Its subcellular location is the cytoplasm. It is found in the cytoskeleton. It localises to the endomembrane system. The protein localises to the myofibril. The protein resides in the sarcomere. Its subcellular location is the m line. It is found in the cytosol. It localises to the cell membrane. Fodrin, which seems to be involved in secretion, interacts with calmodulin in a calcium-dependent manner and is thus candidate for the calcium-dependent movement of the cytoskeleton at the membrane. Plays a critical role in central nervous system development and function. This chain is Spectrin beta chain, non-erythrocytic 1 (Sptbn1), found in Mus musculus (Mouse).